We begin with the raw amino-acid sequence, 356 residues long: Cyclin-D1-binding protein 1 (356 aa).

The residue at position 2 (alanine 2) is an N-acetylalanine. 2 interaction with TCF3 regions span residues 2–181 (ASST…VDFV) and 147–356 (ISCN…AAEL). An interaction with RPLP0 region spans residues 2 to 187 (ASSTAAVPFL…VDFVKDAHEE (186 aa)). The tract at residues 2-205 (ASSTAAVPFL…DPYSGLLNDS (204 aa)) is required for interaction with CCND1. The interval 198–224 (YSGLLNDSEDNSDSHSDEDGVLGLPSN) is disordered. The interval 236–356 (LIIPCLALVR…KALTQRAAEL (121 aa)) is interaction with RPLP0.

This sequence belongs to the CCNDBP1 family. Interacts with CCND1 and GRAP2. May also interact with COPS5, RPLP0, SIRT6, SYF2 and TCF3. Phosphorylated. As to expression, expressed at high levels in brain, intestine, muscle and ovary and at lower levels in heart, kidney, liver, lung, spleen and testis.

It is found in the cytoplasm. The protein localises to the nucleus. In terms of biological role, may negatively regulate cell cycle progression. May act at least in part via inhibition of the cyclin-D1/CDK4 complex, thereby preventing phosphorylation of RB1 and blocking E2F-dependent transcription. May be required for hepatocyte proliferation. The chain is Cyclin-D1-binding protein 1 (Ccndbp1) from Mus musculus (Mouse).